A 178-amino-acid polypeptide reads, in one-letter code: Crossover junction endodeoxyribonuclease RuvC (178 aa).

Catalysis depends on residues Asp-20, Glu-80, and Asp-154. Mg(2+) is bound by residues Asp-20, Glu-80, and Asp-154.

This sequence belongs to the RuvC family. As to quaternary structure, homodimer which binds Holliday junction (HJ) DNA. The HJ becomes 2-fold symmetrical on binding to RuvC with unstacked arms; it has a different conformation from HJ DNA in complex with RuvA. In the full resolvosome a probable DNA-RuvA(4)-RuvB(12)-RuvC(2) complex forms which resolves the HJ. Requires Mg(2+) as cofactor.

Its subcellular location is the cytoplasm. It catalyses the reaction Endonucleolytic cleavage at a junction such as a reciprocal single-stranded crossover between two homologous DNA duplexes (Holliday junction).. Its function is as follows. The RuvA-RuvB-RuvC complex processes Holliday junction (HJ) DNA during genetic recombination and DNA repair. Endonuclease that resolves HJ intermediates. Cleaves cruciform DNA by making single-stranded nicks across the HJ at symmetrical positions within the homologous arms, yielding a 5'-phosphate and a 3'-hydroxyl group; requires a central core of homology in the junction. The consensus cleavage sequence is 5'-(A/T)TT(C/G)-3'. Cleavage occurs on the 3'-side of the TT dinucleotide at the point of strand exchange. HJ branch migration catalyzed by RuvA-RuvB allows RuvC to scan DNA until it finds its consensus sequence, where it cleaves and resolves the cruciform DNA. This chain is Crossover junction endodeoxyribonuclease RuvC, found in Rhodopirellula baltica (strain DSM 10527 / NCIMB 13988 / SH1).